The sequence spans 436 residues: Homeobox protein PKNOX1 (436 aa).

Residues 1–20 (MMATQTLSIDSYQDGQQMQV) are compositionally biased toward polar residues. The segment at 1–49 (MMATQTLSIDSYQDGQQMQVVTELKTEQDPNCSEPDAEGVSPPPVESQT) is disordered. Phosphoserine occurs at positions 33 and 41. The region spanning 80–163 (GSEGTTSASF…MNSETLLSGE (84 aa)) is the MEIS N-terminal domain. A DNA-binding region (homeobox; TALE-type) is located at residues 259-321 (SKNKRGVLPK…NARRRILQPM (63 aa)). The tract at residues 401 to 436 (AGQSEDESVDSTEEDAGALAPAHISGLVLENSDSLQ) is disordered. Over residues 404–416 (SEDESVDSTEEDA) the composition is skewed to acidic residues.

Belongs to the TALE/MEIS homeobox family. In terms of assembly, interacts with MN1. In terms of tissue distribution, ubiquitous. Isoform 2 is expressed in all examined tissues except in bone marrow.

The protein resides in the nucleus. Its function is as follows. Activates transcription in the presence of PBX1A and HOXA1. The polypeptide is Homeobox protein PKNOX1 (Homo sapiens (Human)).